A 150-amino-acid chain; its full sequence is 2-aminobenzenesulfonate 2,3-dioxygenase subunit beta (150 aa).

The protein belongs to the bacterial ring-hydroxylating dioxygenase beta subunit family. Heterotetramer with a alpha2beta2 structure.

It carries out the reaction 2-aminobenzenesulfonate + NADH + O2 + 2 H(+) = 2,3-dihydroxybenzenesulfonate + NH4(+) + NAD(+). Its activity is regulated as follows. Inhibited by o-phenanthroline. Beta subunit of the oxygenase component of the 2-aminobenzenesulfonate 2,3-dioxygenase system (deaminating) (ABSDOS). Can use 2-aminobenzenesulfonate (ABS), benzenesulfonate (BS), 4-toluenesulfonate (TS), 2-nitrobenzenesulfonate, 3- and 4-aminobenzenesulfonates, 4-chloro- and 4-hydroxybenzenesulfonates and pyridine-3-sulfonate as substrates. No desulfonation of ABS to aminocatechol or aminophenol detected. The polypeptide is 2-aminobenzenesulfonate 2,3-dioxygenase subunit beta (Alcaligenes sp).